The following is a 269-amino-acid chain: Imidazoleglycerol-phosphate dehydratase 1, chloroplastic (269 aa).

2 disordered regions span residues 1–31 (MTTA…GSGG) and 54–73 (SGVG…VSSR). Residues 1 to 52 (MTTAPFVSPSLPRLHSARASPFPKPSVGSGGGVAFPARTYGSSLRLRSAVMS) constitute a chloroplast transit peptide. Substrate-binding positions include Glu-83, 109–117 (HMLDQLASH), 135–139 (HHSNE), Arg-161, and Arg-183. Mn(2+) contacts are provided by His-109, His-135, His-136, and Glu-139. Residues His-207, His-231, His-232, and Glu-235 each coordinate Mn(2+). Substrate-binding positions include 231 to 239 (HHIIEATFK) and 261 to 263 (SSK).

The protein belongs to the imidazoleglycerol-phosphate dehydratase family. Mn(2+) is required as a cofactor.

The protein resides in the plastid. It is found in the chloroplast. It carries out the reaction D-erythro-1-(imidazol-4-yl)glycerol 3-phosphate = 3-(imidazol-4-yl)-2-oxopropyl phosphate + H2O. Its pathway is amino-acid biosynthesis; L-histidine biosynthesis; L-histidine from 5-phospho-alpha-D-ribose 1-diphosphate: step 6/9. This chain is Imidazoleglycerol-phosphate dehydratase 1, chloroplastic, found in Triticum aestivum (Wheat).